The chain runs to 611 residues: BTB/POZ domain-containing protein 9 (611 aa).

A BTB domain is found at 36–104 (GDVTFVVEKK…IYTGRATLTD (69 aa)). The BACK domain maps to 142–240 (VCMTFDVASL…SLTELLNVVR (99 aa)). The interval 560-611 (QSAQKDSSDEPGTGGASAAGQQLDPHALQAPSGSSLPSSPGSNSRSPNRQHQ) is disordered. The span at 586 to 611 (ALQAPSGSSLPSSPGSNSRSPNRQHQ) shows a compositional bias: low complexity.

The chain is BTB/POZ domain-containing protein 9 (BTBD9) from Bos taurus (Bovine).